A 109-amino-acid chain; its full sequence is Small ribosomal subunit protein bS6 (109 aa).

Belongs to the bacterial ribosomal protein bS6 family.

Functionally, binds together with bS18 to 16S ribosomal RNA. This Ehrlichia chaffeensis (strain ATCC CRL-10679 / Arkansas) protein is Small ribosomal subunit protein bS6.